A 229-amino-acid polypeptide reads, in one-letter code: Matrix protein (229 aa).

Positions 1–10 (MSSLKKILGL) are enriched in low complexity. The segment at 1–23 (MSSLKKILGLKGKGKKSKKLGIA) is disordered. Residues 2 to 4 (SSL) carry the dynamin binding motif. Residues 24 to 27 (PPPY) carry the PPXY motif motif. The PTAP/PSAP motif motif lies at 37 to 40 (PSAP).

This sequence belongs to the vesiculoviruses matrix protein family. In terms of assembly, homomultimer. Interacts with viral nucleocapsid; this interaction contributes to the virion assembly. Interacts with the viral envelope glycoprotein; this interaction contributes to the virion assembly. Interacts with host RAE1-NUP98 complex. Interacts with host NEDD4 and TSG101. Interacts with host dynamin. Interacts with host NDUFAF4; the interaction inhibits viral propagation and is independent of interferon activation. Interacts with host GTF2H5; the interaction may inhibit host transcription. Phosphorylated by host.

It is found in the virion. Its subcellular location is the host endomembrane system. It localises to the host nucleus membrane. The protein localises to the host nucleus. The protein resides in the host cytoplasm. Forms a double layer around the helical nucleocapsid, the inner matrix layer binding to the N helix and the outer matrix layer binding to the envelope glycoprotein. Plays a major role in assembly and budding of virion, by recruiting cellular partners of the ESCRT complexes that play a key role in releasing the budding particle from the host membrane. Condensates the ribonucleocapsid core during virus assembly. Inhibits the host mRNA nuclear export thereby inducing the shut off of cellular transcription and preventing the interferon signaling and the establishment of antiviral state in infected cells. This shutoff presumably inhibits interferon signaling and thus establishment of antiviral state in virus infected cells. Induces cell-rounding, cytoskeleton disorganization and apoptosis in infected cell. Inhibits host transcription, possibly through interaction with host DNA repair factor IIH/TFIIH GTF2H5 subunit. The protein is Matrix protein (M) of Vesicular stomatitis Indiana virus (strain San Juan) (VSIV).